The primary structure comprises 101 residues: Small ribosomal subunit protein bS18c (101 aa).

The protein belongs to the bacterial ribosomal protein bS18 family. As to quaternary structure, part of the 30S ribosomal subunit.

Its subcellular location is the plastid. The protein resides in the chloroplast. This chain is Small ribosomal subunit protein bS18c, found in Citrus sinensis (Sweet orange).